The following is a 250-amino-acid chain: MHILLANDDGYLAPGLAVLHAALAPLGRITVIAPEQNHSGASNSLTLQRPLSIYEAREGVQKGFRFVNGTPTDCVHIALTGLLDEKPDLVVSGINQGQNMGEDVLYSGTVAAAIEGYLLGIPSIAFSQLHKGWEHLDAAARVARDIVERAIATPPVEPFLLNVNIPNLPFEHIKGYRATRLGKRHPSQPVIAQVNPRGDLNYWIGAAGDARDASEGTDFHATAEGYVSLTPLQLDLTHRSQLEALAQWLN.

A divalent metal cation-binding residues include aspartate 8, aspartate 9, serine 39, and asparagine 95.

Belongs to the SurE nucleotidase family. A divalent metal cation is required as a cofactor.

It is found in the cytoplasm. The enzyme catalyses a ribonucleoside 5'-phosphate + H2O = a ribonucleoside + phosphate. Nucleotidase that shows phosphatase activity on nucleoside 5'-monophosphates. The polypeptide is 5'-nucleotidase SurE (Cupriavidus pinatubonensis (strain JMP 134 / LMG 1197) (Cupriavidus necator (strain JMP 134))).